Consider the following 388-residue polypeptide: Succinate--CoA ligase [ADP-forming] subunit beta (388 aa).

Residues Lys9–Glu244 form the ATP-grasp domain. Residues Lys46, Gly53–Gly55, Glu99, Ala102, and Glu107 contribute to the ATP site. Asn199 and Asp213 together coordinate Mg(2+). Substrate contacts are provided by residues Asn264 and Gly321–Met323.

Belongs to the succinate/malate CoA ligase beta subunit family. In terms of assembly, heterotetramer of two alpha and two beta subunits. Mg(2+) is required as a cofactor.

The catalysed reaction is succinate + ATP + CoA = succinyl-CoA + ADP + phosphate. The enzyme catalyses GTP + succinate + CoA = succinyl-CoA + GDP + phosphate. The protein operates within carbohydrate metabolism; tricarboxylic acid cycle; succinate from succinyl-CoA (ligase route): step 1/1. Its function is as follows. Succinyl-CoA synthetase functions in the citric acid cycle (TCA), coupling the hydrolysis of succinyl-CoA to the synthesis of either ATP or GTP and thus represents the only step of substrate-level phosphorylation in the TCA. The beta subunit provides nucleotide specificity of the enzyme and binds the substrate succinate, while the binding sites for coenzyme A and phosphate are found in the alpha subunit. The polypeptide is Succinate--CoA ligase [ADP-forming] subunit beta (Burkholderia thailandensis (strain ATCC 700388 / DSM 13276 / CCUG 48851 / CIP 106301 / E264)).